A 329-amino-acid chain; its full sequence is Cytosolic arginine sensor for mTORC1 subunit 2 (329 aa).

2 ACT domains span residues 72–140 (ADAT…HTLS) and 262–322 (ELWK…SALK).

The protein belongs to the GATS family. In terms of assembly, forms homodimers and heterodimers with CASTOR1. Interacts with the GATOR2 complex which is composed of MIOS, SEC13, SEH1L, WDR24 and WDR59; the interaction is not regulated by arginine. Widely expressed.

It is found in the cytoplasm. It localises to the cytosol. Functions as a negative regulator of the TORC1 signaling pathway through the GATOR complex. As part of homodimers or heterodimers with CASTOR1, directly binds and inhibits the GATOR subcomplex GATOR2 and thereby mTORC1. Does not directly bind arginine, but binding of arginine to CASTOR1 disrupts the interaction of CASTOR2-containing heterodimers with GATOR2 which can in turn activate mTORC1 and the TORC1 signaling pathway. The protein is Cytosolic arginine sensor for mTORC1 subunit 2 of Homo sapiens (Human).